The sequence spans 419 residues: Transcription termination factor Rho (419 aa).

Residues 48-123 enclose the Rho RNA-BD domain; that stretch reads EISGDGVLEI…LKVDSINFDR (76 aa). 3 RNA-binding regions span residues 61–66, 78–80, and 108–110; these read GFGFLR, DIY, and ERY. ATP-binding positions include 169–174, 181–186, and Arg212; these read GKGQRG and KAGKTI. The segment at 284–288 is RNA-binding 2; that stretch reads VLTGG.

Belongs to the Rho family. As to quaternary structure, homohexamer. The homohexamer assembles into an open ring structure.

In terms of biological role, facilitates transcription termination by a mechanism that involves Rho binding to the nascent RNA, activation of Rho's RNA-dependent ATPase activity, and release of the mRNA from the DNA template. The polypeptide is Transcription termination factor Rho (Pseudomonas aeruginosa (strain ATCC 15692 / DSM 22644 / CIP 104116 / JCM 14847 / LMG 12228 / 1C / PRS 101 / PAO1)).